Here is a 144-residue protein sequence, read N- to C-terminus: Large ribosomal subunit protein uL11 (144 aa).

The protein belongs to the universal ribosomal protein uL11 family. Part of the ribosomal stalk of the 50S ribosomal subunit. Interacts with L10 and the large rRNA to form the base of the stalk. L10 forms an elongated spine to which L12 dimers bind in a sequential fashion forming a multimeric L10(L12)X complex. Post-translationally, one or more lysine residues are methylated.

Forms part of the ribosomal stalk which helps the ribosome interact with GTP-bound translation factors. The chain is Large ribosomal subunit protein uL11 from Streptomyces sp. (strain FRI-5).